A 95-amino-acid polypeptide reads, in one-letter code: Co-chaperonin GroES (95 aa).

This sequence belongs to the GroES chaperonin family. In terms of assembly, heptamer of 7 subunits arranged in a ring. Interacts with the chaperonin GroEL.

It is found in the cytoplasm. Functionally, together with the chaperonin GroEL, plays an essential role in assisting protein folding. The GroEL-GroES system forms a nano-cage that allows encapsulation of the non-native substrate proteins and provides a physical environment optimized to promote and accelerate protein folding. GroES binds to the apical surface of the GroEL ring, thereby capping the opening of the GroEL channel. This Nitratidesulfovibrio vulgaris (strain DSM 19637 / Miyazaki F) (Desulfovibrio vulgaris) protein is Co-chaperonin GroES.